The following is a 158-amino-acid chain: Small ribosomal subunit protein bS6 (158 aa).

The span at Arg-92–Ala-149 shows a compositional bias: basic and acidic residues. The tract at residues Arg-92–Glu-158 is disordered.

It belongs to the bacterial ribosomal protein bS6 family.

Functionally, binds together with bS18 to 16S ribosomal RNA. The chain is Small ribosomal subunit protein bS6 from Rhodopseudomonas palustris (strain ATCC BAA-98 / CGA009).